The sequence spans 481 residues: UDP-glycosyltransferase 72E2 (481 aa).

Residue histidine 18 is the Proton acceptor of the active site. Histidine 18 provides a ligand contact to an anthocyanidin. Residue aspartate 111 is the Charge relay of the active site. Residues alanine 346, glutamine 348, histidine 363, tryptophan 366, serine 368, and glutamate 371 each contribute to the UDP-alpha-D-glucose site. Alanine 386 lines the an anthocyanidin pocket. 2 residues coordinate UDP-alpha-D-glucose: glutamate 387 and glutamine 388.

This sequence belongs to the UDP-glycosyltransferase family. In terms of tissue distribution, expressed in seedlings and roots.

The enzyme catalyses (E)-4-coumarate + UDP-alpha-D-glucose = 4-O-(beta-D-glucosyl)-trans-4-coumarate + UDP + H(+). The catalysed reaction is (E)-coniferol + UDP-alpha-D-glucose = 4-O-(beta-D-glucosyl)-(E)-coniferol + UDP + H(+). It catalyses the reaction (E)-sinapyl alcohol + UDP-alpha-D-glucose = 4-O-(beta-D-glucosyl)-trans-4-sinapoyl alcohol + UDP + H(+). It carries out the reaction (E)-sinapate + UDP-alpha-D-glucose = 4-O-(beta-D-glucosyl)-trans-sinapate + UDP + H(+). The enzyme catalyses (E)-coniferaldehyde + UDP-alpha-D-glucose = 4-O-(beta-D-glucosyl)-4-(E)-coniferyl aldehyde + UDP + H(+). The catalysed reaction is (E)-sinapaldehyde + UDP-alpha-D-glucose = 4-O-(beta-D-glucosyl)-4-trans-sinapoyl aldehyde + UDP + H(+). In terms of biological role, involved in the O-glucosylation of monolignols (alcohol monomers of lignin). Glucosylates coniferyl alcohol to form coniferyl alcohol 4-O-glucoside. Glucosylates sinapyl alcohol to form sinapyl alcohol 4-O-glucoside. Glucosylates coniferyl aldehyde to form coniferyl aldehyde 4-O-glucoside. Glucosylates sinapyl aldehyde to form sinapyl aldehyde 4-O-glucoside. Possesses low activity with sinapate and ferulate as substrates. This chain is UDP-glycosyltransferase 72E2, found in Arabidopsis thaliana (Mouse-ear cress).